The primary structure comprises 224 residues: Adenylate kinase (224 aa).

Gly-10–Thr-15 lines the ATP pocket. An NMP region spans residues Glu-30–Val-59. AMP-binding positions include Ser-31, Arg-36, Asp-57 to Val-59, Gly-85 to Arg-88, and Gln-92. The LID stretch occupies residues Gly-126–Asp-165. An ATP-binding site is contributed by Arg-127. Positions 162 and 174 each coordinate AMP. Pro-211 provides a ligand contact to ATP.

Belongs to the adenylate kinase family. Monomer.

It localises to the cytoplasm. It catalyses the reaction AMP + ATP = 2 ADP. Its pathway is purine metabolism; AMP biosynthesis via salvage pathway; AMP from ADP: step 1/1. Catalyzes the reversible transfer of the terminal phosphate group between ATP and AMP. Plays an important role in cellular energy homeostasis and in adenine nucleotide metabolism. The protein is Adenylate kinase of Desulfosudis oleivorans (strain DSM 6200 / JCM 39069 / Hxd3) (Desulfococcus oleovorans).